The following is a 923-amino-acid chain: Probable ribosylation factor GTPase-activating protein cnt6 (923 aa).

S207 is modified (phosphoserine). Positions 444–455 (TTRRDKGREMHR) are enriched in basic and acidic residues. The disordered stretch occupies residues 444–476 (TTRRDKGREMHRSQVIQTSGRPKSMAPPSPSPI). The PH domain maps to 526 to 632 (KIFKEGLLLV…WIEAICEAAK (107 aa)). The region spanning 714–837 (NIFIQMLRKT…AFIDFAGVDA (124 aa)) is the Arf-GAP domain. The C4-type zinc-finger motif lies at 730-754 (CADCGSVKDVTWCSINIPVVLCIEC).

It localises to the cytoplasm. It is found in the cell tip. Functionally, GTPase-activating protein for the ADP ribosylation factor family. The sequence is that of Probable ribosylation factor GTPase-activating protein cnt6 (cnt6) from Schizosaccharomyces pombe (strain 972 / ATCC 24843) (Fission yeast).